The chain runs to 391 residues: Small ribosomal subunit protein bS1 (391 aa).

S1 motif domains are found at residues 16–90 (GDKV…LSRR), 108–173 (NEII…LSRK), 194–262 (GDVI…LSIK), and 279–348 (NDVI…LSIK).

It belongs to the bacterial ribosomal protein bS1 family.

Its function is as follows. Binds mRNA; thus facilitating recognition of the initiation point. It is needed to translate mRNA with a short Shine-Dalgarno (SD) purine-rich sequence. This chain is Small ribosomal subunit protein bS1 (rpsA), found in Staphylococcus aureus (strain MSSA476).